The following is a 579-amino-acid chain: Type IV pilus assembly ATPase PilB (579 aa).

340–345 (GSGKTV) contacts ATP. 4 residues coordinate Zn(2+): C470, C473, C507, and C510.

Belongs to the GSP E family. Interacts with CpiA.

The protein resides in the cytoplasm. Its activity is regulated as follows. Inhibited by the inhibitory protein CpiA. Functionally, ATPase component of the type IV pilus (T4P). Acts as a molecular motor to provide the energy that is required for biogenesis of the pilus and the extrusion of substrates generated in the cytoplasm. PilB is required for optimal T4P extension and, consequently, efficient natural transformation. May promote processive T4P extension. This chain is Type IV pilus assembly ATPase PilB, found in Acinetobacter baylyi (strain ATCC 33305 / BD413 / ADP1).